The sequence spans 138 residues: Large ribosomal subunit protein uL16 (138 aa).

Over residues 1–17 (MLIPRKVKHRKQHHPRQ) the composition is skewed to basic residues. The disordered stretch occupies residues 1-24 (MLIPRKVKHRKQHHPRQRGIASGG).

It belongs to the universal ribosomal protein uL16 family. In terms of assembly, part of the 50S ribosomal subunit.

Functionally, binds 23S rRNA and is also seen to make contacts with the A and possibly P site tRNAs. The polypeptide is Large ribosomal subunit protein uL16 (Mycolicibacterium gilvum (strain PYR-GCK) (Mycobacterium gilvum (strain PYR-GCK))).